The chain runs to 215 residues: Cytokinin riboside 5'-monophosphate phosphoribohydrolase LOG3 (215 aa).

Substrate-binding positions include E84, R102–K103, G119–E125, and T131.

It belongs to the LOG family. In terms of tissue distribution, expressed in roots and shoots. Detected in root procambium, lateral root primordia, vascular tissues of immature leaves, axillary buds, style and ovular funiculus.

The protein resides in the cytoplasm. The protein localises to the nucleus. It carries out the reaction N(6)-(dimethylallyl)adenosine 5'-phosphate + H2O = N(6)-dimethylallyladenine + D-ribose 5-phosphate. The catalysed reaction is 9-ribosyl-trans-zeatin 5'-phosphate + H2O = trans-zeatin + D-ribose 5-phosphate. Cytokinin-activating enzyme working in the direct activation pathway. Phosphoribohydrolase that converts inactive cytokinin nucleotides to the biologically active free-base forms. The chain is Cytokinin riboside 5'-monophosphate phosphoribohydrolase LOG3 (LOG3) from Arabidopsis thaliana (Mouse-ear cress).